The primary structure comprises 809 residues: BTB/POZ domain-containing protein At2g30600 (809 aa).

BTB domains lie at 211 to 273 (SDTV…QILE) and 351 to 420 (SDIK…NMED). The BACK domain occupies 466 to 537 (VVSSISSCKL…LMWCMKAEES (72 aa)).

It functions in the pathway protein modification; protein ubiquitination. In terms of biological role, may act as a substrate-specific adapter of an E3 ubiquitin-protein ligase complex (CUL3-RBX1-BTB) which mediates the ubiquitination and subsequent proteasomal degradation of target proteins. The protein is BTB/POZ domain-containing protein At2g30600 of Arabidopsis thaliana (Mouse-ear cress).